A 207-amino-acid chain; its full sequence is Large ribosomal subunit protein uL4 (207 aa).

The segment at 49-78 is disordered; the sequence is HAVKNRSAVSGGGRKPWRQKGTGRARQGSI.

Belongs to the universal ribosomal protein uL4 family. Part of the 50S ribosomal subunit.

One of the primary rRNA binding proteins, this protein initially binds near the 5'-end of the 23S rRNA. It is important during the early stages of 50S assembly. It makes multiple contacts with different domains of the 23S rRNA in the assembled 50S subunit and ribosome. In terms of biological role, forms part of the polypeptide exit tunnel. The polypeptide is Large ribosomal subunit protein uL4 (Streptococcus pneumoniae serotype 2 (strain D39 / NCTC 7466)).